Reading from the N-terminus, the 295-residue chain is Elongation factor Ts (295 aa).

An involved in Mg(2+) ion dislocation from EF-Tu region spans residues 79 to 82 (TDFV).

This sequence belongs to the EF-Ts family.

The protein localises to the cytoplasm. Functionally, associates with the EF-Tu.GDP complex and induces the exchange of GDP to GTP. It remains bound to the aminoacyl-tRNA.EF-Tu.GTP complex up to the GTP hydrolysis stage on the ribosome. This Bacillus anthracis (strain A0248) protein is Elongation factor Ts.